Here is a 265-residue protein sequence, read N- to C-terminus: Undecaprenyl-diphosphatase 1 (265 aa).

7 helical membrane passes run 4–24 (IIIA…PISS), 42–62 (AKTF…ILYH), 84–104 (FHVF…HDVI), 108–128 (LFQP…MIFA), 184–204 (SEFS…LDLL), 217–237 (MFAV…VTFL), and 245–265 (LKPF…FVLL).

This sequence belongs to the UppP family.

The protein localises to the cell membrane. The enzyme catalyses di-trans,octa-cis-undecaprenyl diphosphate + H2O = di-trans,octa-cis-undecaprenyl phosphate + phosphate + H(+). Functionally, catalyzes the dephosphorylation of undecaprenyl diphosphate (UPP). Confers resistance to bacitracin. In Bacillus thuringiensis (strain Al Hakam), this protein is Undecaprenyl-diphosphatase 1.